Consider the following 144-residue polypeptide: 6,7-dimethyl-8-ribityllumazine synthase (144 aa).

5-amino-6-(D-ribitylamino)uracil-binding positions include F21, A56–E58, and A80–I82. Position 85–86 (G85–T86) interacts with (2S)-2-hydroxy-3-oxobutyl phosphate. H88 acts as the Proton donor in catalysis. F113 lines the 5-amino-6-(D-ribitylamino)uracil pocket. R127 contributes to the (2S)-2-hydroxy-3-oxobutyl phosphate binding site.

This sequence belongs to the DMRL synthase family. Forms an icosahedral capsid composed of 60 subunits, arranged as a dodecamer of pentamers.

The enzyme catalyses (2S)-2-hydroxy-3-oxobutyl phosphate + 5-amino-6-(D-ribitylamino)uracil = 6,7-dimethyl-8-(1-D-ribityl)lumazine + phosphate + 2 H2O + H(+). It participates in cofactor biosynthesis; riboflavin biosynthesis; riboflavin from 2-hydroxy-3-oxobutyl phosphate and 5-amino-6-(D-ribitylamino)uracil: step 1/2. In terms of biological role, catalyzes the formation of 6,7-dimethyl-8-ribityllumazine by condensation of 5-amino-6-(D-ribitylamino)uracil with 3,4-dihydroxy-2-butanone 4-phosphate. This is the penultimate step in the biosynthesis of riboflavin. This is 6,7-dimethyl-8-ribityllumazine synthase (ribH) from Photobacterium leiognathi.